We begin with the raw amino-acid sequence, 340 residues long: Phosphate acyltransferase (340 aa).

The tract at residues 285–340 is disordered; the sequence is WRQSGRPARHRGQEPRRHRQPRFWLCHRRGRRRSPRQRNRTHPGTGQPPAGCAGAR. Basic residues predominate over residues 300–325; that stretch reads RRHRQPRFWLCHRRGRRRSPRQRNRT.

This sequence belongs to the PlsX family. As to quaternary structure, homodimer. Probably interacts with PlsY.

Its subcellular location is the cytoplasm. The enzyme catalyses a fatty acyl-[ACP] + phosphate = an acyl phosphate + holo-[ACP]. It functions in the pathway lipid metabolism; phospholipid metabolism. Its function is as follows. Catalyzes the reversible formation of acyl-phosphate (acyl-PO(4)) from acyl-[acyl-carrier-protein] (acyl-ACP). This enzyme utilizes acyl-ACP as fatty acyl donor, but not acyl-CoA. The chain is Phosphate acyltransferase from Laribacter hongkongensis (strain HLHK9).